We begin with the raw amino-acid sequence, 551 residues long: Inosine-5'-monophosphate dehydrogenase (551 aa).

CBS domains follow at residues 102–163 (FILD…PLSE) and 165–221 (MTSD…PLAS). NAD(+)-binding positions include 258 to 260 (DSS) and 308 to 310 (GMG). Glycine 310 and glycine 312 together coordinate K(+). Serine 313 contacts IMP. Cysteine 315 contributes to the K(+) binding site. The Thioimidate intermediate role is filled by cysteine 315. Residues 349-351 (DGG), 372-373 (GS), and 396-400 (YRGMG) each bind IMP. Residues 407 to 462 (AGTRRTASPPARGLRSPEASPSTAASSGGASRASALSEASPSAKSEASRTSTSTGS) form a disordered region. Low complexity predominate over residues 422–462 (SPEASPSTAASSGGASRASALSEASPSAKSEASRTSTSTGS). Arginine 465 acts as the Proton acceptor in catalysis. IMP is bound at residue glutamine 477. K(+) is bound by residues glutamate 536 and glycine 537.

The protein belongs to the IMPDH/GMPR family. Homotetramer. The cofactor is K(+).

The protein localises to the cytoplasm. The enzyme catalyses IMP + NAD(+) + H2O = XMP + NADH + H(+). Its pathway is purine metabolism; XMP biosynthesis via de novo pathway; XMP from IMP: step 1/1. With respect to regulation, mycophenolic acid (MPA) is a non-competitive inhibitor that prevents formation of the closed enzyme conformation by binding to the same site as the amobile flap. In contrast, mizoribine monophosphate (MZP) is a competitive inhibitor that induces the closed conformation. MPA is a potent inhibitor of mammalian IMPDHs but a poor inhibitor of the bacterial enzymes. MZP is a more potent inhibitor of bacterial IMPDH. Potently inhibited by MPA and adenine dinucleotide analogs such as thiazole-4-carboxamide adenine dinucleotide (TAD). In terms of biological role, catalyzes the conversion of inosine 5'-phosphate (IMP) to xanthosine 5'-phosphate (XMP), the first committed and rate-limiting step in the de novo synthesis of guanine nucleotides, and therefore plays an important role in the regulation of cell growth. The polypeptide is Inosine-5'-monophosphate dehydrogenase (Toxoplasma gondii).